Consider the following 631-residue polypeptide: MTAPPGARPRAASPPPNMRSRDFWGSAARLVKRLAPQRRLSIAVITLGIAGTTIGVIVPRILGHATDLLFNGVIGRGLPGGITKAQAVASARARGDNTFADLLSGMNVVPGQGVDFAAVERTLALALALYLAAALMIWAQARLLNLTVQKTMVRLRTDVEDKVHRLPLSYFDGQQRGELLSRVTNDIDNLQSSLSMTISQLVTSILTMVAVLAMMVSISGLLALITLLTVPLSLLVTRAITRRSQPLFVAHWTSTGRLNAHLEETYSGFTVVKTFGHQAAARERFHELNDDVYQAGFGAQFLSGLVQPATAFIGNLGYVAVAVAGGLQVATGQITLGSIQAFIQYIRQFNMPLSQLAGMYNALQSGVASAERVFDVLDEPEESPEPEPELPNLTGRVEFEHVNFAYLPGTPVIRDLSLVAEPGSTVAIVGPTGAGKTTLVNLLMRFYEIGSGRILIDGVDIASVSRQSLRSRIGMVLQDTWLYDGTIAENIAYGRPEATTDEIVEAARAAHVDRFVNTLPAGYQTRVSGDGGSISVGEKQLITIARAFLARPQLLILDEATSSVDTRTELLIQRAMRELRRDRTSFIIAHRLSTIRDADHILVVQTGQIVERGNHAELLARRGVYYQMTRA.

Over residues 1–11 the composition is skewed to low complexity; that stretch reads MTAPPGARPRA. The interval 1–20 is disordered; the sequence is MTAPPGARPRAASPPPNMRS. Helical transmembrane passes span 42–62, 123–143, and 205–225; these read IAVITLGIAGTTIGVIVPRIL, LALALALYLAAALMIWAQARL, and ILTMVAVLAMMVSISGLLALI. The ABC transmembrane type-1 domain occupies 42–365; it reads IAVITLGIAG…LAGMYNALQS (324 aa). The region spanning 397 to 631 is the ABC transporter domain; the sequence is VEFEHVNFAY…RGVYYQMTRA (235 aa). 430–437 is a binding site for ATP; that stretch reads GPTGAGKT.

It belongs to the ABC transporter superfamily. Lipid exporter (TC 3.A.1.106) family.

It localises to the cell inner membrane. In terms of biological role, ABC transporter involved in fatty acid import. Transmembrane domains (TMD) form a pore in the membrane and the ATP-binding domain (NBD) is responsible for energy generation. The protein is Fatty acid ABC transporter ATP-binding/permease protein of Mycobacterium bovis (strain ATCC BAA-935 / AF2122/97).